The following is a 477-amino-acid chain: MPNSLISRLVSPSLRSQPSKISALRFLTTVSAAERLYGQLQGCTSNLEKELASANVQLDSSCINEVLRRCDPNQFQSGLRFFIWAGTLSSHRHSAYMYTKACDILKIRAKPDLIKYVIESYRKEECFVNVKTMRIVLTLCNQANLADEALWVLRKFPEFNVCADTVAYNLVIRLFADKGDLNIADMLIKEMDCVGLYPDVITYTSMINGYCNAGKIDDAWRLAKEMSKHDCVLNSVTYSRILEGVCKSGDMERALELLAEMEKEDGGGLISPNAVTYTLVIQAFCEKRRVEEALLVLDRMGNRGCMPNRVTACVLIQGVLENDEDVKALSKLIDKLVKLGGVSLSECFSSATVSLIRMKRWEEAEKIFRLMLVRGVRPDGLACSHVFRELCLLERYLDCFLLYQEIEKKDVKSTIDSDIHAVLLLGLCQQGNSWEAAKLAKSMLDKKMRLKVSHVEKIIEALKKTGDEDLMSRFSID.

9 PPR repeats span residues asparagine 129–alanine 163, aspartate 164–proline 198, aspartate 199–leucine 233, asparagine 234–glutamate 264, asparagine 273–proline 307, asparagine 308–serine 343, leucine 344–proline 378, aspartate 379–serine 413, and aspartate 416–leucine 450.

It belongs to the PPR family. P subfamily.

The polypeptide is Pentatricopeptide repeat-containing protein At5g47360 (Arabidopsis thaliana (Mouse-ear cress)).